The primary structure comprises 68 residues: Protein SlyX homolog (68 aa).

Belongs to the SlyX family.

In Brucella melitensis biotype 1 (strain ATCC 23456 / CCUG 17765 / NCTC 10094 / 16M), this protein is Protein SlyX homolog.